The chain runs to 154 residues: MSEKKQLQVEAICNGSVIDHIPAGQGIKILKLFHLLDTRQRITVGLNLPSAALGSKDLIKVENTQLTADQANQLALFAPQATVNIIEDFKVVTKHQLELPGEIVGVFACPNSNCISHREPVRSRFGVRSTQGEVRLKCHYCEKSFTKEIVSEAF.

The Zn(2+) site is built by C109, C114, C138, and C141.

The protein belongs to the PyrI family. As to quaternary structure, contains catalytic and regulatory chains. The cofactor is Zn(2+).

Its function is as follows. Involved in allosteric regulation of aspartate carbamoyltransferase. The sequence is that of Aspartate carbamoyltransferase regulatory chain from Tolumonas auensis (strain DSM 9187 / NBRC 110442 / TA 4).